The chain runs to 661 residues: Altered inheritance of mitochondria protein 3-1 (661 aa).

7 disordered regions span residues 19–99 (TKTV…YSGY), 116–142 (AQNTPYSSPAQQQPVSPQPPVQNSQYN), 154–194 (QPAG…TFQS), 263–419 (LPQQ…DSSS), 431–473 (RNIP…SPGI), 487–563 (YAGH…RKDN), and 615–661 (EAAT…FVHS). A compositionally biased stretch (basic and acidic residues) spans 37–58 (KDKDTHHTDHHEEDEYSEDYHT). Positions 120 to 142 (PYSSPAQQQPVSPQPPVQNSQYN) are enriched in low complexity. Low complexity predominate over residues 263 to 318 (LPQQQQQQQQQPEYNTQLQQNQQLHNQQAYGQQQQIYSNNTQPQYVSQTQQTSYTQ). Composition is skewed to polar residues over residues 319 to 328 (NAPPQQTRSP) and 356 to 371 (VNQTAITSTNSANEAL). Residues 390–399 (THRDRGRASV) show a composition bias toward basic and acidic residues. Residues 406-419 (ENMQTNNSTIDSSS) are compositionally biased toward polar residues. Residues 434 to 447 (PAPAVGPPGAATRA) are compositionally biased toward low complexity. Composition is skewed to polar residues over residues 458-473 (SQSMSTNSVVETSPGI), 512-533 (RSTSTKMNTQPNPQTPISPSRD), and 541-552 (RSTVSSIQSSNR).

This sequence belongs to the AIM3 family.

Its subcellular location is the membrane raft. This Candida glabrata (strain ATCC 2001 / BCRC 20586 / JCM 3761 / NBRC 0622 / NRRL Y-65 / CBS 138) (Yeast) protein is Altered inheritance of mitochondria protein 3-1 (AIM3-1).